The sequence spans 594 residues: UvrABC system protein C (594 aa).

Residues 13–99 (HSSGVYQYFD…IKQLKPKYNI (87 aa)) form the GIY-YIG domain. The 36-residue stretch at 205–240 (DKLIKELELKMERLSNNLRFEEALIYRDRIAKIQKI) folds into the UVR domain.

The protein belongs to the UvrC family. In terms of assembly, interacts with UvrB in an incision complex.

The protein resides in the cytoplasm. The UvrABC repair system catalyzes the recognition and processing of DNA lesions. UvrC both incises the 5' and 3' sides of the lesion. The N-terminal half is responsible for the 3' incision and the C-terminal half is responsible for the 5' incision. The chain is UvrABC system protein C from Helicobacter pylori (strain Shi470).